The primary structure comprises 363 residues: UDP-N-acetylglucosamine--N-acetylmuramyl-(pentapeptide) pyrophosphoryl-undecaprenol N-acetylglucosamine transferase (363 aa).

Residues 10–12, asparagine 124, serine 195, and glutamine 295 each bind UDP-N-acetyl-alpha-D-glucosamine; that span reads TGG.

The protein belongs to the glycosyltransferase 28 family. MurG subfamily.

The protein resides in the cell membrane. The enzyme catalyses di-trans,octa-cis-undecaprenyl diphospho-N-acetyl-alpha-D-muramoyl-L-alanyl-D-glutamyl-meso-2,6-diaminopimeloyl-D-alanyl-D-alanine + UDP-N-acetyl-alpha-D-glucosamine = di-trans,octa-cis-undecaprenyl diphospho-[N-acetyl-alpha-D-glucosaminyl-(1-&gt;4)]-N-acetyl-alpha-D-muramoyl-L-alanyl-D-glutamyl-meso-2,6-diaminopimeloyl-D-alanyl-D-alanine + UDP + H(+). The protein operates within cell wall biogenesis; peptidoglycan biosynthesis. Functionally, cell wall formation. Catalyzes the transfer of a GlcNAc subunit on undecaprenyl-pyrophosphoryl-MurNAc-pentapeptide (lipid intermediate I) to form undecaprenyl-pyrophosphoryl-MurNAc-(pentapeptide)GlcNAc (lipid intermediate II). The chain is UDP-N-acetylglucosamine--N-acetylmuramyl-(pentapeptide) pyrophosphoryl-undecaprenol N-acetylglucosamine transferase from Bacillus subtilis (strain 168).